A 1312-amino-acid chain; its full sequence is MASVKVAVRVRPMNRREKDLEAKFIIQMEKSKTTITNLKIPEGGTGDSGRERTKTFTYDFSFYSADTKSPDYVSQEMVFKTLGTDVVKSAFEGYNACVFAYGQTGSGKSYTMMGNSGDSGLIPRICEALFSRINETTRWDEASFRTEVSYLEIYNERVRDLLRRKSSKTFNLRVREHPKEGPYVEDLSKHLVQNYSDVEELMDAGNINRTTAATGMNDVSSRSHAIFTIKFTQAKFDAEMPCETVSKIHLVDLAGSERADATGATGVRLKEGGNINKSLVTLGNVISALADLSQDAANPLVKKKQVFVPYRDSVLTWLLKDSLGGNSKTIMIATISPADVNYGETLSTLRYANRAKNIINKPTINEDANVKLIRELRAEIARLKTLLAQGNQIALLDSPTALSMEEKLHQNEARVQELTKEWTNKWNETQNILKEQTLALRKEGIGVVLDSELPHLIGIDDDLLSTGIILYHLKEGQTYVGREDASTEQDIVLHGLDLESEHCVFENAGGTVTLIPLRGSQCSVNGVQIVDATQLNQGAVILLGRTNMFRFNHPKEAAKLREKRKSGLLSSFSLSMTDLSKSCENLSAVMLYNPGLEFERQQREELEKLESKRKLIEEMEEKQKSDKAELERMQQEVETRRKETEIVQRQIRKQEESLKRRSFHIENKLKDLLAEKERFEEERLREQQGLEQQRRQEEESLFRIREELRKLQELNSHEQAEKVQIFQELDRLHQEQNAQSAKLRLEKRRLEEEEKEQVQRVAHLEEQLRKRQDTAPLLCPGEAQRAQEEKRELESIREALLQAKEMRAGGDHTCRDELERAQQYFLEFKRRQLVKLASLEKDLVQQKDLLSKEVQEEKVALEHVKCDAGGDPSFLATDDGNILGGPPDLDKIKTAETRLQSREHQLQDLLQNHLPALLEEKQRVLDALDSGVLGLDTTLCQVEKEVGEKEEQIAQYQANASQLQQLRATFEFTANVARQEEKVRRKEKEILESQEKQQREALEQAVAKLEQRRSALQRCSTLDLEIQEQRQKLGSLHTSEWSGWQASLETDGEALEMDPARLEHEIHQLKQKICEVDGVQRPHHGILEGQAVLSSLPPSGGNSHLAPLMDARISAYIEEEVQRRLHDLHRAIGDANHTPADVMKSNEELHNGTTQRKLKYERMYSRSLGTNRDDLKDPIKISIPRYVLCGQGKDEHFEFEVKISVLDETWTVFRRYSRFREMHKTLKLKYAELAALEFPPKKLFGNKDERVVAERRTHLEKYLREFFSVMLQSETSPLHINKVGLTLSKHTICEFSPFFKKGVFDYSSHGTG.

The 356-residue stretch at 3 to 358 (SVKVAVRVRP…LRYANRAKNI (356 aa)) folds into the Kinesin motor domain. ATP is bound at residue 102-109 (GQTGSGKS). A coiled-coil region spans residues 366–425 (EDANVKLIRELRAEIARLKTLLAQGNQIALLDSPTALSMEEKLHQNEARVQELTKEWTNK). Ser398 carries the phosphoserine modification. Positions 480 to 544 (VGREDASTEQ…LNQGAVILLG (65 aa)) constitute an FHA domain. A Phosphothreonine modification is found at Thr577. Phosphoserine is present on residues Ser582, Ser838, Ser1047, and Ser1145. 2 coiled-coil regions span residues 835 to 913 (KLAS…LQNH) and 941 to 1073 (QVEK…KQKI). The PX domain occupies 1177–1291 (DPIKISIPRY…KVGLTLSKHT (115 aa)).

It belongs to the TRAFAC class myosin-kinesin ATPase superfamily. Kinesin family. In terms of assembly, interacts with PTPN21. Interacts with RAB14.

The protein resides in the cytoplasm. Its subcellular location is the cytoskeleton. It is found in the early endosome membrane. The protein localises to the spindle. Plus end-directed microtubule-dependent motor protein involved in endosome transport and receptor recycling and degradation. Regulates the plus end motility of early endosomes and the balance between recycling and degradation of receptors such as EGF receptor (EGFR) and FGF receptor (FGFR). Regulates the Golgi to endosome transport of FGFR-containing vesicles during early development, a key process for developing basement membrane and epiblast and primitive endoderm lineages during early postimplantation development. This chain is Kinesin-like protein KIF16B (Kif16b), found in Mus musculus (Mouse).